The primary structure comprises 187 residues: Elongation factor P (187 aa).

It belongs to the elongation factor P family.

It localises to the cytoplasm. It participates in protein biosynthesis; polypeptide chain elongation. Its function is as follows. Involved in peptide bond synthesis. Stimulates efficient translation and peptide-bond synthesis on native or reconstituted 70S ribosomes in vitro. Probably functions indirectly by altering the affinity of the ribosome for aminoacyl-tRNA, thus increasing their reactivity as acceptors for peptidyl transferase. In Mycobacterium leprae (strain Br4923), this protein is Elongation factor P.